The primary structure comprises 436 residues: MLKVSAVLCVCAAAWCSQSLAAAAAVAAAGGRSDGGNFLDDKQWLTTISQYDKEVGQWNKFRDEVEDDYFRTWSPGKPFDQALDPAKDPCLKMKCSRHKVCIAQDSQTAVCISHRRLTHRMKEAGVDHRQWRGPILSTCKQCPVVYPSPVCGSDGHTYSFQCKLEYQACVLGKQISVKCEGHCPCPSDKPTSTSRNVKRACSDLEFREVANRLRDWFKALHESGSQNKKTKTLLRPERSRFDTSILPICKDSLGWMFNRLDTNYDLLLDQSELRSIYLDKNEQCTKAFFNSCDTYKDSLISNNEWCYCFQRQQDPPCQTELSNIQKRQGVKKLLGQYIPLCDEDGYYKPTQCHGSVGQCWCVDRYGNEVMGSRINGVADCAIDFEISGDFASGDFHEWTDDEDDEDDIMNDEDEIEDDDEDEGDDDDGGDDHDVYI.

The first 21 residues, 1–21 (MLKVSAVLCVCAAAWCSQSLA), serve as a signal peptide directing secretion. Cystine bridges form between C90–C101, C95–C111, C139–C169, C142–C162, C151–C183, C317–C341, C352–C359, and C361–C380. The Kazal-like domain maps to 133–185 (GPILSTCKQCPVVYPSPVCGSDGHTYSFQCKLEYQACVLGKQISVKCEGHCPC). Positions 314–380 (DPPCQTELSN…GSRINGVADC (67 aa)) constitute a Thyroglobulin type-1 domain. Residues S387 and S392 are each glycosylated (O-linked (Xyl...) (glycosaminoglycan) serine). Residues 393 to 436 (GDFHEWTDDEDDEDDIMNDEDEIEDDDEDEGDDDDGGDDHDVYI) are disordered. Residues 399–430 (TDDEDDEDDIMNDEDEIEDDDEDEGDDDDGGD) show a composition bias toward acidic residues.

In terms of processing, contains chondroitin sulfate and heparan sulfate O-linked oligosaccharides. In terms of tissue distribution, expressed in brain.

The protein localises to the secreted. It localises to the extracellular space. Its subcellular location is the extracellular matrix. May participate in diverse steps of neurogenesis. Inhibits the processing of pro-matrix metalloproteinase 2 (MMP-2) by MT1-MMP and MT3-MMP. May interfere with tumor invasion. This is Testican-3 (SPOCK3) from Homo sapiens (Human).